Reading from the N-terminus, the 337-residue chain is Aspartate carbamoyltransferase catalytic subunit (337 aa).

Carbamoyl phosphate contacts are provided by R54 and T55. K82 lines the L-aspartate pocket. R104, H134, and Q137 together coordinate carbamoyl phosphate. L-aspartate contacts are provided by R177 and R232. Carbamoyl phosphate is bound by residues G277 and P278.

This sequence belongs to the aspartate/ornithine carbamoyltransferase superfamily. ATCase family. In terms of assembly, heterododecamer (2C3:3R2) of six catalytic PyrB chains organized as two trimers (C3), and six regulatory PyrI chains organized as three dimers (R2).

It catalyses the reaction carbamoyl phosphate + L-aspartate = N-carbamoyl-L-aspartate + phosphate + H(+). It functions in the pathway pyrimidine metabolism; UMP biosynthesis via de novo pathway; (S)-dihydroorotate from bicarbonate: step 2/3. Functionally, catalyzes the condensation of carbamoyl phosphate and aspartate to form carbamoyl aspartate and inorganic phosphate, the committed step in the de novo pyrimidine nucleotide biosynthesis pathway. This is Aspartate carbamoyltransferase catalytic subunit from Arthrobacter sp. (strain FB24).